Consider the following 1088-residue polypeptide: Neural cell adhesion molecule 1-A (1088 aa).

A signal peptide spans 1–19 (MLHIKDLIWTLYFIGTAVA). 5 Ig-like C2-type domains span residues 20–108 (LEVN…GTVN), 113–202 (QKLT…KDIQ), 209–294 (PTIQ…AEAT), 303–397 (PKIT…FEVQ), and 400–484 (PKIR…HEFS). Topologically, residues 20–705 (LEVNIVPDQG…TASAGTGLGT (686 aa)) are extracellular. 2 cysteine pairs are disulfide-bonded: Cys-41-Cys-93 and Cys-136-Cys-186. Asn-82 is a glycosylation site (N-linked (GlcNAc...) asparagine). Heparin is bound by residues 149-153 (RHKGK) and 158-162 (KKDVR). An N-linked (GlcNAc...) asparagine glycan is attached at Asn-219. An intrachain disulfide couples Cys-232 to Cys-282. N-linked (GlcNAc...) asparagine glycosylation is found at Asn-310, Asn-341, Asn-417, Asn-443, and Asn-472. A disulfide bridge connects residues Cys-323 and Cys-379. Cys-420 and Cys-473 are joined by a disulfide. Fibronectin type-III domains follow at residues 493 to 592 (TPSS…TQPV) and 594 to 690 (EPSA…TAKP). Residues 706-723 (GAIVGILIVIFVLLLVVV) traverse the membrane as a helical segment. Topologically, residues 724–1088 (DVTCFFLNKC…TQTNANESKA (365 aa)) are cytoplasmic. Positions 758–784 (EGKAAFSKDESKEPIVEVRTEEERTPN) are enriched in basic and acidic residues. Disordered regions lie at residues 758–802 (EGKA…LTEP), 829–1000 (FATA…DGGT), and 1024–1088 (VASG…ESKA). Low complexity-rich tracts occupy residues 835–847 (SPTS…TSST), 854–875 (APDS…APTT), and 913–936 (PSAA…VPPN). The segment covering 965–974 (QPSTVKNPTE) has biased composition (polar residues). Positions 1046–1064 (AKTEKTQVEEKSKPEEIDV) are enriched in basic and acidic residues. A compositionally biased stretch (polar residues) spans 1076–1088 (NEATQTNANESKA).

In terms of processing, polysialylated by ST8SIA2 and ST8SIA4. Polysialylation modulates cell interactions by confering both attractive and repulsive properties that are highly regulated by ST8SIA2 and ST8SIA4. Polysialylation is formed on a-2,3-linked sialic acid of core glycans. In terms of tissue distribution, expressed in neuron and in presumptive neural tissue.

It is found in the cell membrane. In terms of biological role, this protein is a cell adhesion molecule involved in neuron-neuron adhesion, neurite fasciculation, outgrowth of neurites, etc. This chain is Neural cell adhesion molecule 1-A, found in Xenopus laevis (African clawed frog).